Here is a 149-residue protein sequence, read N- to C-terminus: uncharacterized protein (149 aa).

Residues 16-128 (PAGEPAIRVI…LFTFVAIDED (113 aa)) enclose the HotDog ACOT-type domain.

The protein belongs to the acyl coenzyme A hydrolase family.

This is an uncharacterized protein from Zymomonas mobilis subsp. mobilis (strain ATCC 31821 / ZM4 / CP4).